The sequence spans 556 residues: Polypeptide N-acetylgalactosaminyltransferase 13 (556 aa).

Residues 1–4 (MRRL) are Cytoplasmic-facing. Residues 5 to 27 (VYCKVVLATSLMWVLVDVFLLLY) form a helical; Signal-anchor for type II membrane protein membrane-spanning segment. At 28–556 (FSECNKCDDK…WLLRNMTLGT (529 aa)) the chain is on the lumenal side. N-linked (GlcNAc...) asparagine glycans are attached at residues asparagine 94 and asparagine 116. Intrachain disulfides connect cysteine 105-cysteine 338, cysteine 329-cysteine 407, cysteine 441-cysteine 458, cysteine 481-cysteine 496, and cysteine 522-cysteine 539. The catalytic subdomain A stretch occupies residues 114 to 224 (LPNTSVVIVF…LGWLEPLLAR (111 aa)). Residues aspartate 155 and arginine 185 each contribute to the substrate site. Mn(2+) is bound by residues aspartate 208 and histidine 210. The catalytic subdomain B stretch occupies residues 284-346 (PVRTPTMAGG…TCSHVGHVFR (63 aa)). Tryptophan 315 lines the substrate pocket. Histidine 343 contacts Mn(2+). Positions 346 and 351 each coordinate substrate. Positions 428–550 (YSLGEIRNVE…GSRSQQWLLR (123 aa)) constitute a Ricin B-type lectin domain. A glycan (N-linked (GlcNAc...) asparagine) is linked at asparagine 551.

Belongs to the glycosyltransferase 2 family. GalNAc-T subfamily. The cofactor is Mn(2+).

The protein resides in the golgi apparatus membrane. It catalyses the reaction L-seryl-[protein] + UDP-N-acetyl-alpha-D-galactosamine = a 3-O-[N-acetyl-alpha-D-galactosaminyl]-L-seryl-[protein] + UDP + H(+). The enzyme catalyses L-threonyl-[protein] + UDP-N-acetyl-alpha-D-galactosamine = a 3-O-[N-acetyl-alpha-D-galactosaminyl]-L-threonyl-[protein] + UDP + H(+). Its pathway is protein modification; protein glycosylation. In terms of biological role, catalyzes the initial reaction in O-linked oligosaccharide biosynthesis, the transfer of an N-acetyl-D-galactosamine (GalNAc) residue from UDP-GalNAc to a serine or threonine residue on the protein receptor. Generates GalNAc-O-Ser/Thr structure also known as Tn antigen, which itself is immunogenic but also serves as a precursor for the synthesis of different mucin-type O-glycan core structures. Contributes to the synthesis of O-linked glycans on mucins and proteoglycans of the central nervous system. Can glycosylate both unmodified peptides and glycopeptides that already contain an O-linked GalNAc sugar. Transfers GalNAc to Thr-/Ser-rich tandem repeats GTTPSPVPTTSTTSAP of MUC5AC. Transfers GalNAc to three consecutive serine/threonine residues on SDC3 forming a triplet-Tn epitope expressed in Purkinje cells of the developing brain. May promote neurogenesis through glycosylation and stabilization of PDPN. This Rattus norvegicus (Rat) protein is Polypeptide N-acetylgalactosaminyltransferase 13 (Galnt13).